A 1545-amino-acid chain; its full sequence is Tricalbin-3 (1545 aa).

Positions 1-89 (MTGIKAQVHP…SNPEGKKQSS (89 aa)) are disordered. At 1–206 (MTGIKAQVHP…AYILENFYND (206 aa)) the chain is on the cytoplasmic side. A compositionally biased stretch (polar residues) spans 62–80 (TKTSNSVSDVSKGQKTADS). Residues serine 67 and serine 112 each carry the phosphoserine modification. Residues 207-227 (WYCNIATVLGTCFFSWLFAYI) form a helical membrane-spanning segment. Position 228 (glycine 228) is a topological domain, extracellular. A helical transmembrane segment spans residues 229 to 249 (FSWWSMIFIFLGTATVYNAEY). The Cytoplasmic portion of the chain corresponds to 250–1545 (TRFNRNIRDD…VPEVPQEYTQ (1296 aa)). Residues 272–479 (RVESTTWLNS…PPNHLDINVE (208 aa)) form the SMP-LTD domain. Residues 470–596 (PPNHLDINVE…LQNPVLDNQT (127 aa)) form the C2 1 domain. A coiled-coil region spans residues 620–660 (EDKSEEKAVERAEAKAKGKKEDENEDTTEKEEDENEESSQT). Positions 624–641 (EEKAVERAEAKAKGKKED) are enriched in basic and acidic residues. Residues 624-660 (EEKAVERAEAKAKGKKEDENEDTTEKEEDENEESSQT) form a disordered region. Acidic residues predominate over residues 642–658 (ENEDTTEKEEDENEESS). C2 domains lie at 646 to 763 (TTEK…AQEF) and 783 to 897 (MTGA…SGKY). Positions 937–972 (SPEELVNVEKLEKELKEKKKKFEATQEENEQEMEKN) form a coiled coil. The C2 4 domain occupies 1119–1234 (PTSVKLPSSE…EVGKTYNWNL (116 aa)). Aspartate 1150, aspartate 1156, aspartate 1204, aspartate 1206, and aspartate 1212 together coordinate Ca(2+). Residues 1304–1404 (LLKSLGGNPM…NSRGHSRASS (101 aa)) form a disordered region. Residues 1318–1328 (SSNGNESNGAK) are compositionally biased toward polar residues. Residues 1329-1340 (KSSEKKSFDRRS) are compositionally biased toward basic and acidic residues. Residues serine 1340, serine 1342, and serine 1346 each carry the phosphoserine modification. The span at 1341-1351 (PSNLNSTSVTP) shows a compositional bias: polar residues. Phosphothreonine is present on threonine 1350. Residue serine 1354 is modified to Phosphoserine. Residues 1361–1373 (VPNTSYAPVQSAS) show a composition bias toward polar residues. The span at 1377-1404 (KPTDNTSSSSNKKDTPSSNSRGHSRASS) shows a compositional bias: low complexity. The 119-residue stretch at 1396-1514 (SRGHSRASSF…QQDGQISVKL (119 aa)) folds into the C2 5 domain. Phosphoserine is present on serine 1400.

It belongs to the tricalbin family. As to quaternary structure, interacts with TCB2 via its C-terminal domain. Requires Ca(2+) as cofactor.

The protein resides in the cell membrane. The protein localises to the endoplasmic reticulum membrane. In terms of biological role, may play a role in membrane trafficking. This chain is Tricalbin-3 (TCB3), found in Saccharomyces cerevisiae (strain ATCC 204508 / S288c) (Baker's yeast).